Here is a 526-residue protein sequence, read N- to C-terminus: Glutamate--cysteine ligase (526 aa).

It belongs to the glutamate--cysteine ligase type 1 family. Type 1 subfamily.

It carries out the reaction L-cysteine + L-glutamate + ATP = gamma-L-glutamyl-L-cysteine + ADP + phosphate + H(+). It functions in the pathway sulfur metabolism; glutathione biosynthesis; glutathione from L-cysteine and L-glutamate: step 1/2. The polypeptide is Glutamate--cysteine ligase (Shewanella amazonensis (strain ATCC BAA-1098 / SB2B)).